Consider the following 398-residue polypeptide: 4-hydroxy-3-methylbut-2-enyl diphosphate reductase (398 aa).

Cys-66 provides a ligand contact to [4Fe-4S] cluster. A (2E)-4-hydroxy-3-methylbut-2-enyl diphosphate-binding site is contributed by His-96. Residue His-96 participates in dimethylallyl diphosphate binding. His-96 provides a ligand contact to isopentenyl diphosphate. Cys-157 is a binding site for [4Fe-4S] cluster. A (2E)-4-hydroxy-3-methylbut-2-enyl diphosphate-binding site is contributed by His-185. Dimethylallyl diphosphate is bound at residue His-185. His-185 provides a ligand contact to isopentenyl diphosphate. Glu-187 (proton donor) is an active-site residue. Thr-250 lines the (2E)-4-hydroxy-3-methylbut-2-enyl diphosphate pocket. Cys-288 serves as a coordination point for [4Fe-4S] cluster. The (2E)-4-hydroxy-3-methylbut-2-enyl diphosphate site is built by Ser-317, Ser-318, Asn-319, and Ser-380. Positions 317, 318, 319, and 380 each coordinate dimethylallyl diphosphate. Ser-317, Ser-318, Asn-319, and Ser-380 together coordinate isopentenyl diphosphate.

Belongs to the IspH family. The cofactor is [4Fe-4S] cluster.

It carries out the reaction isopentenyl diphosphate + 2 oxidized [2Fe-2S]-[ferredoxin] + H2O = (2E)-4-hydroxy-3-methylbut-2-enyl diphosphate + 2 reduced [2Fe-2S]-[ferredoxin] + 2 H(+). The catalysed reaction is dimethylallyl diphosphate + 2 oxidized [2Fe-2S]-[ferredoxin] + H2O = (2E)-4-hydroxy-3-methylbut-2-enyl diphosphate + 2 reduced [2Fe-2S]-[ferredoxin] + 2 H(+). It functions in the pathway isoprenoid biosynthesis; dimethylallyl diphosphate biosynthesis; dimethylallyl diphosphate from (2E)-4-hydroxy-3-methylbutenyl diphosphate: step 1/1. The protein operates within isoprenoid biosynthesis; isopentenyl diphosphate biosynthesis via DXP pathway; isopentenyl diphosphate from 1-deoxy-D-xylulose 5-phosphate: step 6/6. Catalyzes the conversion of 1-hydroxy-2-methyl-2-(E)-butenyl 4-diphosphate (HMBPP) into a mixture of isopentenyl diphosphate (IPP) and dimethylallyl diphosphate (DMAPP). Acts in the terminal step of the DOXP/MEP pathway for isoprenoid precursor biosynthesis. This chain is 4-hydroxy-3-methylbut-2-enyl diphosphate reductase, found in Prochlorococcus marinus (strain AS9601).